A 326-amino-acid chain; its full sequence is tRNA-dihydrouridine(20a/20b) synthase [NAD(P)+] (326 aa).

FMN is bound by residues 26–28 (PMV) and Gln79. Cys108 acts as the Proton donor in catalysis. Residues Lys149, His177, 208 to 210 (NGD), and 232 to 233 (AR) contribute to the FMN site.

This sequence belongs to the Dus family. Dus4 subfamily. It depends on FMN as a cofactor.

The protein localises to the mitochondrion. The catalysed reaction is 5,6-dihydrouridine(20a) in tRNA + NADP(+) = uridine(20a) in tRNA + NADPH + H(+). It catalyses the reaction 5,6-dihydrouridine(20a) in tRNA + NAD(+) = uridine(20a) in tRNA + NADH + H(+). It carries out the reaction 5,6-dihydrouridine(20b) in tRNA + NAD(+) = uridine(20b) in tRNA + NADH + H(+). The enzyme catalyses 5,6-dihydrouridine(20b) in tRNA + NADP(+) = uridine(20b) in tRNA + NADPH + H(+). The catalysed reaction is a 5,6-dihydrouridine in mRNA + NAD(+) = a uridine in mRNA + NADH + H(+). It catalyses the reaction a 5,6-dihydrouridine in mRNA + NADP(+) = a uridine in mRNA + NADPH + H(+). In terms of biological role, catalyzes the synthesis of dihydrouridine, a modified base found in the D-loop of most tRNAs. Also able to mediate dihydrouridylation of some mRNAs, thereby affecting their translation. The sequence is that of tRNA-dihydrouridine(20a/20b) synthase [NAD(P)+] from Schizosaccharomyces pombe (strain 972 / ATCC 24843) (Fission yeast).